We begin with the raw amino-acid sequence, 160 residues long: Ribosomal RNA large subunit methyltransferase H (160 aa).

Residues L77, G109, and 128-133 (LSNLTF) each bind S-adenosyl-L-methionine.

The protein belongs to the RNA methyltransferase RlmH family. Homodimer.

Its subcellular location is the cytoplasm. It carries out the reaction pseudouridine(1915) in 23S rRNA + S-adenosyl-L-methionine = N(3)-methylpseudouridine(1915) in 23S rRNA + S-adenosyl-L-homocysteine + H(+). In terms of biological role, specifically methylates the pseudouridine at position 1915 (m3Psi1915) in 23S rRNA. This is Ribosomal RNA large subunit methyltransferase H from Desulforamulus reducens (strain ATCC BAA-1160 / DSM 100696 / MI-1) (Desulfotomaculum reducens).